The chain runs to 217 residues: External core antigen (217 aa).

Residues 1–20 (MYLFHLCLVFACVPCPTVQA) form the signal peptide. The tract at residues 26–28 (GWL) is HBEAG. The segment at 166–217 (APILSTLPEHTVIRRRGGSRAARSPRRRTPSPRRRRSQSPRRRRSQSPASNC) is disordered. Residues 178-210 (IRRRGGSRAARSPRRRTPSPRRRRSQSPRRRRS) show a composition bias toward basic residues. One copy of the 1; half-length repeat lies at 189–195 (SPRRRTP). The interval 189–211 (SPRRRTPSPRRRRSQSPRRRRSQ) is 3 X 8 AA repeats of S-P-R-R-R-R-S-Q. Positions 189 to 217 (SPRRRTPSPRRRRSQSPRRRRSQSPASNC) are excised as a propeptide. 2 consecutive repeat copies span residues 196-203 (SPRRRRSQ) and 204-211 (SPRRRRSQ).

Belongs to the orthohepadnavirus precore antigen family. Homodimerizes. In terms of processing, phosphorylated. Post-translationally, cleaved by host furin.

It is found in the secreted. It localises to the host nucleus. Its function is as follows. May regulate immune response to the intracellular capsid in acting as a T-cell tolerogen, by having an immunoregulatory effect which prevents destruction of infected cells by cytotoxic T-cells. This immune regulation may predispose to chronicity during perinatal infections and prevent severe liver injury during adult infections. The protein is External core antigen of Otospermophilus beecheyi (California ground squirrel).